The following is a 336-amino-acid chain: Glycerol-3-phosphate dehydrogenase [NAD(P)+] (336 aa).

NADPH contacts are provided by S14, W15, R35, R36, and K109. Residues K109 and G139 each coordinate sn-glycerol 3-phosphate. A143 lines the NADPH pocket. Sn-glycerol 3-phosphate-binding residues include K194, D247, S257, R258, and N259. Catalysis depends on K194, which acts as the Proton acceptor. R258 provides a ligand contact to NADPH. E284 lines the NADPH pocket.

It belongs to the NAD-dependent glycerol-3-phosphate dehydrogenase family.

It localises to the cytoplasm. The enzyme catalyses sn-glycerol 3-phosphate + NAD(+) = dihydroxyacetone phosphate + NADH + H(+). The catalysed reaction is sn-glycerol 3-phosphate + NADP(+) = dihydroxyacetone phosphate + NADPH + H(+). The protein operates within membrane lipid metabolism; glycerophospholipid metabolism. Its function is as follows. Catalyzes the reduction of the glycolytic intermediate dihydroxyacetone phosphate (DHAP) to sn-glycerol 3-phosphate (G3P), the key precursor for phospholipid synthesis. This Streptomyces griseus subsp. griseus (strain JCM 4626 / CBS 651.72 / NBRC 13350 / KCC S-0626 / ISP 5235) protein is Glycerol-3-phosphate dehydrogenase [NAD(P)+].